Reading from the N-terminus, the 136-residue chain is MLKVDIVTPKGIVYTEEVESVNIPAYDGEMGILENHMLLLTQIKPGLVYFNKDDKNGIAVGYGFADITPDKVIILTEEAVPVGNIDLEEYKKVFEEATRKLSDARTAEEISEWQKKREMAETFINIAKHFSPKIKA.

It belongs to the ATPase epsilon chain family. As to quaternary structure, F-type ATPases have 2 components, CF(1) - the catalytic core - and CF(0) - the membrane proton channel. CF(1) has five subunits: alpha(3), beta(3), gamma(1), delta(1), epsilon(1). CF(0) has three main subunits: a, b and c.

It is found in the cell inner membrane. Its function is as follows. Produces ATP from ADP in the presence of a proton gradient across the membrane. This Hydrogenobaculum sp. (strain Y04AAS1) protein is ATP synthase epsilon chain.